Here is a 153-residue protein sequence, read N- to C-terminus: Ribosomal RNA large subunit methyltransferase H (153 aa).

S-adenosyl-L-methionine contacts are provided by residues Leu-75, Gly-102, and 121–126 (LSPLTM).

The protein belongs to the RNA methyltransferase RlmH family. Homodimer.

The protein resides in the cytoplasm. The catalysed reaction is pseudouridine(1915) in 23S rRNA + S-adenosyl-L-methionine = N(3)-methylpseudouridine(1915) in 23S rRNA + S-adenosyl-L-homocysteine + H(+). In terms of biological role, specifically methylates the pseudouridine at position 1915 (m3Psi1915) in 23S rRNA. This Nitratiruptor sp. (strain SB155-2) protein is Ribosomal RNA large subunit methyltransferase H.